We begin with the raw amino-acid sequence, 244 residues long: Type III pantothenate kinase (244 aa).

An ATP-binding site is contributed by 8 to 15; sequence DQGNSACK. 94-97 provides a ligand contact to substrate; sequence GADR. Asp-96 acts as the Proton acceptor in catalysis. Residue Asp-117 coordinates K(+). An ATP-binding site is contributed by Thr-120. Thr-175 contacts substrate.

The protein belongs to the type III pantothenate kinase family. Homodimer. NH4(+) serves as cofactor. The cofactor is K(+).

The protein resides in the cytoplasm. It catalyses the reaction (R)-pantothenate + ATP = (R)-4'-phosphopantothenate + ADP + H(+). Its pathway is cofactor biosynthesis; coenzyme A biosynthesis; CoA from (R)-pantothenate: step 1/5. Its function is as follows. Catalyzes the phosphorylation of pantothenate (Pan), the first step in CoA biosynthesis. This is Type III pantothenate kinase from Porphyromonas gingivalis (strain ATCC 33277 / DSM 20709 / CIP 103683 / JCM 12257 / NCTC 11834 / 2561).